The primary structure comprises 568 residues: Urease subunit alpha (568 aa).

The 438-residue stretch at Gly-131–Phe-568 folds into the Urease domain. Residues His-136, His-138, and Lys-219 each coordinate Ni(2+). Residue Lys-219 is modified to N6-carboxylysine. Residue His-221 participates in substrate binding. The Ni(2+) site is built by His-248 and His-274. His-322 acts as the Proton donor in catalysis. Residue Asp-362 coordinates Ni(2+).

It belongs to the metallo-dependent hydrolases superfamily. Urease alpha subunit family. Heterotrimer of UreA (gamma), UreB (beta) and UreC (alpha) subunits. Three heterotrimers associate to form the active enzyme. Requires Ni cation as cofactor. Carboxylation allows a single lysine to coordinate two nickel ions.

The protein resides in the cytoplasm. It carries out the reaction urea + 2 H2O + H(+) = hydrogencarbonate + 2 NH4(+). It participates in nitrogen metabolism; urea degradation; CO(2) and NH(3) from urea (urease route): step 1/1. The sequence is that of Urease subunit alpha from Trichormus variabilis (strain ATCC 29413 / PCC 7937) (Anabaena variabilis).